The primary structure comprises 475 residues: uncharacterized protein (475 aa).

Residues 7–28 form a helical membrane-spanning segment; the sequence is HVISIFETLGAYFINIFYNFLY. 3 N-linked (GlcNAc...) asparagine; by host glycosylation sites follow: N73, N83, and N195. A coiled-coil region spans residues 183–233; that stretch reads ELEETYARLSSYNRSLLHQIEELTSEKKSLLADLSTLRKKYEKRQSEYRRL. Positions 295–305 are enriched in polar residues; sequence SQELTSKSPNN. The tract at residues 295–324 is disordered; sequence SQELTSKSPNNYPVPHSRTIVSKPPDNYPV. N-linked (GlcNAc...) asparagine; by host glycans are attached at residues N450 and N460.

Belongs to the asfivirus B475L family.

It is found in the host membrane. This is an uncharacterized protein from Ornithodoros (relapsing fever ticks).